We begin with the raw amino-acid sequence, 120 residues long: Glycine cleavage system H protein (120 aa).

Positions 17 to 99 constitute a Lipoyl-binding domain; the sequence is VATVGITNYA…QGAGWFFKLK (83 aa). Lysine 58 bears the N6-lipoyllysine mark.

It belongs to the GcvH family. In terms of assembly, the glycine cleavage system is composed of four proteins: P, T, L and H. (R)-lipoate is required as a cofactor.

Its function is as follows. The glycine cleavage system catalyzes the degradation of glycine. The H protein shuttles the methylamine group of glycine from the P protein to the T protein. The polypeptide is Glycine cleavage system H protein (Rhizobium etli (strain ATCC 51251 / DSM 11541 / JCM 21823 / NBRC 15573 / CFN 42)).